The primary structure comprises 143 residues: Large ribosomal subunit protein uL11 (143 aa).

This sequence belongs to the universal ribosomal protein uL11 family. In terms of assembly, part of the ribosomal stalk of the 50S ribosomal subunit. Interacts with L10 and the large rRNA to form the base of the stalk. L10 forms an elongated spine to which L12 dimers bind in a sequential fashion forming a multimeric L10(L12)X complex. Post-translationally, one or more lysine residues are methylated.

Functionally, forms part of the ribosomal stalk which helps the ribosome interact with GTP-bound translation factors. In Rhizobium etli (strain ATCC 51251 / DSM 11541 / JCM 21823 / NBRC 15573 / CFN 42), this protein is Large ribosomal subunit protein uL11.